The sequence spans 233 residues: Ion-translocating oxidoreductase complex subunit E (233 aa).

6 consecutive transmembrane segments (helical) span residues 18–38 (ALVQLLGLCPLLAVSSTATNA), 39–59 (LGLGLATTLVLVCTNTAVSAL), 69–89 (IPIYVMIIASVVSTVQMLINA), 92–112 (FGLYQSLGIFIPLIVTNCIVI), 128–148 (ALDGFAMGMGATCALFVLGAL), and 182–202 (PFLLAMLPPGAFIGLGLLLAG).

This sequence belongs to the NqrDE/RnfAE family. As to quaternary structure, the complex is composed of six subunits: RnfA, RnfB, RnfC, RnfD, RnfE and RnfG.

It is found in the cell inner membrane. In terms of biological role, part of a membrane-bound complex that couples electron transfer with translocation of ions across the membrane. The protein is Ion-translocating oxidoreductase complex subunit E of Yersinia pseudotuberculosis serotype O:3 (strain YPIII).